The following is a 391-amino-acid chain: Methionine import ATP-binding protein MetN 2 (391 aa).

The ABC transporter domain maps to 44–280 (VHVGKVFATP…PRHGATRALL (237 aa)). Residue 77-84 (GRSGAGKS) coordinates ATP.

The protein belongs to the ABC transporter superfamily. Methionine importer (TC 3.A.1.24) family. The complex is composed of two ATP-binding proteins (MetN), two transmembrane proteins (MetI) and a solute-binding protein (MetQ).

The protein resides in the cell inner membrane. The enzyme catalyses L-methionine(out) + ATP + H2O = L-methionine(in) + ADP + phosphate + H(+). The catalysed reaction is D-methionine(out) + ATP + H2O = D-methionine(in) + ADP + phosphate + H(+). Part of the ABC transporter complex MetNIQ involved in methionine import. Responsible for energy coupling to the transport system. This is Methionine import ATP-binding protein MetN 2 from Burkholderia ambifaria (strain ATCC BAA-244 / DSM 16087 / CCUG 44356 / LMG 19182 / AMMD) (Burkholderia cepacia (strain AMMD)).